Here is a 158-residue protein sequence, read N- to C-terminus: 2-C-methyl-D-erythritol 2,4-cyclodiphosphate synthase (158 aa).

Positions 9 and 11 each coordinate a divalent metal cation. Residues 9–11 (DVH) and 35–36 (HS) each bind 4-CDP-2-C-methyl-D-erythritol 2-phosphate. Residue His-43 participates in a divalent metal cation binding. 4-CDP-2-C-methyl-D-erythritol 2-phosphate is bound by residues 57 to 59 (DLG), 62 to 66 (FPDTD), 133 to 136 (TTTE), Phe-140, and Arg-143.

The protein belongs to the IspF family. In terms of assembly, homotrimer. A divalent metal cation is required as a cofactor.

It carries out the reaction 4-CDP-2-C-methyl-D-erythritol 2-phosphate = 2-C-methyl-D-erythritol 2,4-cyclic diphosphate + CMP. Its pathway is isoprenoid biosynthesis; isopentenyl diphosphate biosynthesis via DXP pathway; isopentenyl diphosphate from 1-deoxy-D-xylulose 5-phosphate: step 4/6. Functionally, involved in the biosynthesis of isopentenyl diphosphate (IPP) and dimethylallyl diphosphate (DMAPP), two major building blocks of isoprenoid compounds. Catalyzes the conversion of 4-diphosphocytidyl-2-C-methyl-D-erythritol 2-phosphate (CDP-ME2P) to 2-C-methyl-D-erythritol 2,4-cyclodiphosphate (ME-CPP) with a corresponding release of cytidine 5-monophosphate (CMP). This is 2-C-methyl-D-erythritol 2,4-cyclodiphosphate synthase from Desulfitobacterium hafniense (strain DSM 10664 / DCB-2).